Here is a 335-residue protein sequence, read N- to C-terminus: Acetyl-coenzyme A carboxylase carboxyl transferase subunit alpha (335 aa).

Residues 48-308 (TLEKKVDALR…KGMLIEELKA (261 aa)) form the CoA carboxyltransferase C-terminal domain.

The protein belongs to the AccA family. In terms of assembly, acetyl-CoA carboxylase is a heterohexamer composed of biotin carboxyl carrier protein (AccB), biotin carboxylase (AccC) and two subunits each of ACCase subunit alpha (AccA) and ACCase subunit beta (AccD).

It localises to the cytoplasm. It carries out the reaction N(6)-carboxybiotinyl-L-lysyl-[protein] + acetyl-CoA = N(6)-biotinyl-L-lysyl-[protein] + malonyl-CoA. Its pathway is lipid metabolism; malonyl-CoA biosynthesis; malonyl-CoA from acetyl-CoA: step 1/1. Functionally, component of the acetyl coenzyme A carboxylase (ACC) complex. First, biotin carboxylase catalyzes the carboxylation of biotin on its carrier protein (BCCP) and then the CO(2) group is transferred by the carboxyltransferase to acetyl-CoA to form malonyl-CoA. The sequence is that of Acetyl-coenzyme A carboxylase carboxyl transferase subunit alpha from Chlorobium luteolum (strain DSM 273 / BCRC 81028 / 2530) (Pelodictyon luteolum).